The chain runs to 424 residues: Nuclear hormone receptor family member nhr-55 (424 aa).

The segment covering 1–19 (MNSPSSSSSFCSSSSSPSS) has biased composition (low complexity). The tract at residues 1–20 (MNSPSSSSSFCSSSSSPSSL) is disordered. The nuclear receptor DNA-binding region spans 25 to 100 (PDTCQVCGQK…VGMTIENFQF (76 aa)). 2 consecutive NR C4-type zinc fingers follow at residues 28-55 (CQVCGQKSHGKHFGAVTCRACAAFFRRC) and 64-88 (CRRNMNCEFLKNGWFNCKPCRLKKC). The region spanning 169-424 (EVPLHTPNAL…FSHPEVFIDL (256 aa)) is the NR LBD domain.

Belongs to the nuclear hormone receptor family.

Its subcellular location is the nucleus. In terms of biological role, orphan nuclear receptor. The protein is Nuclear hormone receptor family member nhr-55 (nhr-55) of Caenorhabditis elegans.